A 258-amino-acid chain; its full sequence is Imidazole glycerol phosphate synthase subunit HisF (258 aa).

Active-site residues include Asp11 and Asp130.

The protein belongs to the HisA/HisF family. In terms of assembly, heterodimer of HisH and HisF.

It localises to the cytoplasm. The catalysed reaction is 5-[(5-phospho-1-deoxy-D-ribulos-1-ylimino)methylamino]-1-(5-phospho-beta-D-ribosyl)imidazole-4-carboxamide + L-glutamine = D-erythro-1-(imidazol-4-yl)glycerol 3-phosphate + 5-amino-1-(5-phospho-beta-D-ribosyl)imidazole-4-carboxamide + L-glutamate + H(+). Its pathway is amino-acid biosynthesis; L-histidine biosynthesis; L-histidine from 5-phospho-alpha-D-ribose 1-diphosphate: step 5/9. Functionally, IGPS catalyzes the conversion of PRFAR and glutamine to IGP, AICAR and glutamate. The HisF subunit catalyzes the cyclization activity that produces IGP and AICAR from PRFAR using the ammonia provided by the HisH subunit. This is Imidazole glycerol phosphate synthase subunit HisF from Methylorubrum extorquens (strain PA1) (Methylobacterium extorquens).